The sequence spans 103 residues: Cell division suppressor protein YneA (103 aa).

The region spanning 36 to 87 (VKIEVQSGDTLWGLADQVNDSKSIDKNAFIDWVTQHNDLASTEIQPGDILVI) is the LysM domain.

The protein belongs to the YneA family.

The protein localises to the cytoplasm. Inhibits cell division during the SOS response. Affects a later stage of the cell division protein assembly, after the assembly of the Z ring, by probably suppressing recruitment of FtsL and/or DivIC to the division machinery. This Bacillus pumilus (strain SAFR-032) protein is Cell division suppressor protein YneA.